We begin with the raw amino-acid sequence, 422 residues long: Glutamate-1-semialdehyde 2,1-aminomutase (422 aa).

At K258 the chain carries N6-(pyridoxal phosphate)lysine.

The protein belongs to the class-III pyridoxal-phosphate-dependent aminotransferase family. HemL subfamily. As to quaternary structure, homodimer. Pyridoxal 5'-phosphate serves as cofactor.

The protein resides in the cytoplasm. The enzyme catalyses (S)-4-amino-5-oxopentanoate = 5-aminolevulinate. It functions in the pathway porphyrin-containing compound metabolism; protoporphyrin-IX biosynthesis; 5-aminolevulinate from L-glutamyl-tRNA(Glu): step 2/2. This Chlamydia trachomatis serovar L2 (strain ATCC VR-902B / DSM 19102 / 434/Bu) protein is Glutamate-1-semialdehyde 2,1-aminomutase.